The following is a 278-amino-acid chain: tRNA (guanine-N(7)-)-methyltransferase (278 aa).

S-adenosyl-L-methionine-binding positions include Gly-95, 118 to 119 (EI), 153 to 154 (NA), and Cys-173. The active site involves Asp-176. 251–253 (TEE) is an S-adenosyl-L-methionine binding site.

Belongs to the class I-like SAM-binding methyltransferase superfamily. TrmB family. Forms a complex with TRM82.

It is found in the nucleus. The enzyme catalyses guanosine(46) in tRNA + S-adenosyl-L-methionine = N(7)-methylguanosine(46) in tRNA + S-adenosyl-L-homocysteine. Its pathway is tRNA modification; N(7)-methylguanine-tRNA biosynthesis. Functionally, catalyzes the formation of N(7)-methylguanine at position 46 (m7G46) in tRNA. The protein is tRNA (guanine-N(7)-)-methyltransferase of Kluyveromyces lactis (strain ATCC 8585 / CBS 2359 / DSM 70799 / NBRC 1267 / NRRL Y-1140 / WM37) (Yeast).